A 1210-amino-acid polypeptide reads, in one-letter code: Homeodomain-interacting protein kinase 1 (1210 aa).

Residue K25 forms a Glycyl lysine isopeptide (Lys-Gly) (interchain with G-Cter in SUMO); alternate linkage. Residue K25 forms a Glycyl lysine isopeptide (Lys-Gly) (interchain with G-Cter in SUMO2); alternate linkage. Glycyl lysine isopeptide (Lys-Gly) (interchain with G-Cter in SUMO2) cross-links involve residues K120 and K124. The region spanning 190–518 (YEVLEFLGRG…PLKTLNHQFV (329 aa)) is the Protein kinase domain. ATP contacts are provided by residues 196 to 204 (LGRGTFGQV) and K219. The active-site Proton acceptor is D315. The segment at 835–856 (QQQSSSLPSKKNKQSAPVSSKS) is disordered. Residues 844-847 (KKNK) carry the Nuclear localization signal 1 (NLS1) motif. S872 carries the post-translational modification Phosphoserine. The interaction with TP53 stretch occupies residues 885-1093 (PVQDQHQPII…FQHGSPLHST (209 aa)). The required for localization to nuclear speckles stretch occupies residues 891 to 998 (QPIIIPDTPS…PLKTQLGDCT (108 aa)). Positions 902 to 926 (PVSVITIRSDTDEEEDNKYKPNSSS) are SUMO interaction motifs (SIM); required for nuclear localization and kinase activity. Positions 938 to 981 (TVNDSPDSDSSLSSPHPTDTLSALRGNSGTLLEGPGRPAADGIG) are disordered. The segment covering 941–959 (DSPDSDSSLSSPHPTDTLS) has biased composition (low complexity). K991 is covalently cross-linked (Glycyl lysine isopeptide (Lys-Gly) (interchain with G-Cter in SUMO2)). Disordered regions lie at residues 1046–1069 (LSQN…APRR) and 1084–1104 (FQHG…APAH). Low complexity-rich tracts occupy residues 1047–1063 (SQNQ…ERSS) and 1095–1104 (HPHLAPAPAH). S1200 bears the Phosphoserine mark. A Glycyl lysine isopeptide (Lys-Gly) (interchain with G-Cter in SUMO) cross-link involves residue K1203.

It belongs to the protein kinase superfamily. CMGC Ser/Thr protein kinase family. HIPK subfamily. As to quaternary structure, interacts with Nkx1-2, Nkx2-5, MYB, PARK7, DAXX and p53/TP53. Part of a cytoplasmic complex made of HIPK1, DAB2IP and MAP3K5 in response to TNF. This complex formation promotes MAP3K5-JNK activation and subsequent apoptosis. Phosphorylated and activated by JNK1. Autophosphorylated. In terms of processing, sumoylated. When conjugated it is directed to nuclear speckles. SENP1-mediated desumoylation is mediated by TNF in response to stress stimuli, triggering transient translocation from nucleus to cytoplasm. As to expression, ubiquitously expressed, with high levels in reproductive tissues. Expressed in the epithelial layer of mammary gland, uterus and epididymis, in the corpus luteum, and in post-meiotic round spermatids.

It localises to the nucleus. The protein resides in the cytoplasm. The protein localises to the nucleus speckle. The catalysed reaction is L-seryl-[protein] + ATP = O-phospho-L-seryl-[protein] + ADP + H(+). The enzyme catalyses L-threonyl-[protein] + ATP = O-phospho-L-threonyl-[protein] + ADP + H(+). Its function is as follows. Serine/threonine-protein kinase involved in transcription regulation and TNF-mediated cellular apoptosis. Plays a role as a corepressor for homeodomain transcription factors. Phosphorylates DAXX and MYB. Phosphorylates DAXX in response to stress, and mediates its translocation from the nucleus to the cytoplasm. Inactivates MYB transcription factor activity by phosphorylation. Prevents MAP3K5-JNK activation in the absence of TNF. TNF triggers its translocation to the cytoplasm in response to stress stimuli, thus activating nuclear MAP3K5-JNK by derepression and promoting apoptosis. May be involved in anti-oxidative stress responses. Involved in the regulation of eye size, lens formation and retinal lamination during late embryogenesis. Promotes angiogenesis and to be involved in erythroid differentiation. May be involved in malignant squamous cell tumor formation. Phosphorylates PAGE4 at 'Thr-51' which is critical for the ability of PAGE4 to potentiate the transcriptional activator activity of JUN. The chain is Homeodomain-interacting protein kinase 1 (Hipk1) from Mus musculus (Mouse).